Consider the following 316-residue polypeptide: Apolipoprotein E (316 aa).

Residues 1–18 form the signal peptide; it reads MKVLWVALVVALLAGCQA. 8 consecutive repeat copies span residues 79-100, 101-122, 123-144, 145-166, 167-188, 189-210, 211-232, and 233-254. The segment at 79 to 254 is 8 X 22 AA approximate tandem repeats; it reads VLMEETMKEV…RLDKMRQQLE (176 aa). M142 carries the methionine sulfoxide modification. Position 146 is a phosphoserine (S146). Positions 157 to 167 are LDL and other lipoprotein receptors binding; that stretch reads HLRKLRKRLLR. 161–164 serves as a coordination point for heparin; that stretch reads LRKR. The lipid-binding and lipoprotein association stretch occupies residues 209–289; that stretch reads AATLSTQVGQ…SWFEPLVEDM (81 aa). Residue 228–235 participates in heparin binding; that stretch reads RQKLHGRL. A homooligomerization region spans residues 265 to 316; the sequence is SQIRLQAEAFQARLRSWFEPLVEDMQRQWAGLVEKVQLALHLSPTSPPSENH. Positions 277-289 are specificity for association with VLDL; it reads RLRSWFEPLVEDM.

Belongs to the apolipoprotein A1/A4/E family. Homotetramer. May interact with ABCA1; functionally associated with ABCA1 in the biogenesis of HDLs. May interact with APP/A4 amyloid-beta peptide; the interaction is extremely stable in vitro but its physiological significance is unclear. May interact with MAPT. May interact with MAP2. In the cerebrospinal fluid, interacts with secreted SORL1. Interacts with PMEL; this allows the loading of PMEL luminal fragment on ILVs to induce fibril nucleation. APOE exists as multiple glycosylated and sialylated glycoforms within cells and in plasma. The extent of glycosylation and sialylation are tissue and context specific. In terms of processing, glycated in plasma VLDL. Post-translationally, phosphorylated by FAM20C in the extracellular medium.

It is found in the secreted. The protein localises to the extracellular space. Its subcellular location is the extracellular matrix. The protein resides in the extracellular vesicle. It localises to the endosome. It is found in the multivesicular body. In terms of biological role, APOE is an apolipoprotein, a protein associating with lipid particles, that mainly functions in lipoprotein-mediated lipid transport between organs via the plasma and interstitial fluids. APOE is a core component of plasma lipoproteins and is involved in their production, conversion and clearance. Apolipoproteins are amphipathic molecules that interact both with lipids of the lipoprotein particle core and the aqueous environment of the plasma. As such, APOE associates with chylomicrons, chylomicron remnants, very low density lipoproteins (VLDL) and intermediate density lipoproteins (IDL) but shows a preferential binding to high-density lipoproteins (HDL). It also binds a wide range of cellular receptors including the LDL receptor/LDLR and the very low-density lipoprotein receptor/VLDLR that mediate the cellular uptake of the APOE-containing lipoprotein particles. Finally, APOE also has a heparin-binding activity and binds heparan-sulfate proteoglycans on the surface of cells, a property that supports the capture and the receptor-mediated uptake of APOE-containing lipoproteins by cells. This chain is Apolipoprotein E (APOE), found in Ovis aries (Sheep).